The primary structure comprises 152 residues: Transcriptional repressor NrdR (152 aa).

A zinc finger spans residues 3–34 (CPFCNHGELKVIDSRNAPEANAIKRRRECLNC). Residues 48–138 (LQVLKRDGRY…VYRRFKDVGE (91 aa)) enclose the ATP-cone domain.

This sequence belongs to the NrdR family. Zn(2+) serves as cofactor.

Negatively regulates transcription of bacterial ribonucleotide reductase nrd genes and operons by binding to NrdR-boxes. This Chlamydia abortus (strain DSM 27085 / S26/3) (Chlamydophila abortus) protein is Transcriptional repressor NrdR.